The primary structure comprises 290 residues: UPF0750 membrane protein YpjC (290 aa).

Transmembrane regions (helical) follow at residues 9 to 29 (NIFF…HFNM), 47 to 67 (ALFH…IFFI), 75 to 95 (TMFV…SIFQ), 106 to 126 (DLAL…GIIF), 146 to 166 (FGIP…ILSL), and 179 to 199 (LVAV…GYAA).

It belongs to the UPF0750 family.

The protein localises to the cell membrane. The polypeptide is UPF0750 membrane protein YpjC (ypjC) (Bacillus subtilis (strain 168)).